A 123-amino-acid polypeptide reads, in one-letter code: ATP synthase epsilon chain (123 aa).

Positions 96-123 are disordered; it reads ESRKQSAETEHDKAVAESELRAVKRMEA.

This sequence belongs to the ATPase epsilon chain family. As to quaternary structure, F-type ATPases have 2 components, CF(1) - the catalytic core - and CF(0) - the membrane proton channel. CF(1) has five subunits: alpha(3), beta(3), gamma(1), delta(1), epsilon(1). CF(0) has three main subunits: a, b and c.

The protein localises to the cell membrane. Functionally, produces ATP from ADP in the presence of a proton gradient across the membrane. This chain is ATP synthase epsilon chain, found in Corynebacterium jeikeium (strain K411).